The following is a 205-amino-acid chain: MANLKVMDQNGKDSGEVTLNDKVFGIEPNESVVFETIIRQRAGKRQGTSKVKNRSAVRGGGKKPWRQKGTGRARQGSIRSPQWRGGGTVFGPTPRSYAYTMPRKQRRLAIKSVLSQKMIDKDLIVLDKLAMSAPKTKDLVSMLNSLNVDGKVLIVSDDNNVQLSARNLAKVKAVPVNGLNVEDAVNYGKLILTQDAVKKIEEVLA.

The disordered stretch occupies residues 43 to 96 (GKRQGTSKVKNRSAVRGGGKKPWRQKGTGRARQGSIRSPQWRGGGTVFGPTPRS). Residues 51–71 (VKNRSAVRGGGKKPWRQKGTG) show a composition bias toward basic residues.

Belongs to the universal ribosomal protein uL4 family. In terms of assembly, part of the 50S ribosomal subunit.

In terms of biological role, one of the primary rRNA binding proteins, this protein initially binds near the 5'-end of the 23S rRNA. It is important during the early stages of 50S assembly. It makes multiple contacts with different domains of the 23S rRNA in the assembled 50S subunit and ribosome. Its function is as follows. Forms part of the polypeptide exit tunnel. The protein is Large ribosomal subunit protein uL4 of Lactobacillus helveticus (strain DPC 4571).